Here is a 261-residue protein sequence, read N- to C-terminus: Glucosamine-6-phosphate deaminase (261 aa).

Asp-67 functions as the Proton acceptor; for enolization step in the catalytic mechanism. Asp-136 serves as the catalytic For ring-opening step. The active-site Proton acceptor; for ring-opening step is His-138. The active-site For ring-opening step is the Glu-143.

This sequence belongs to the glucosamine/galactosamine-6-phosphate isomerase family. NagB subfamily.

The enzyme catalyses alpha-D-glucosamine 6-phosphate + H2O = beta-D-fructose 6-phosphate + NH4(+). It functions in the pathway amino-sugar metabolism; N-acetylneuraminate degradation; D-fructose 6-phosphate from N-acetylneuraminate: step 5/5. Catalyzes the reversible isomerization-deamination of glucosamine 6-phosphate (GlcN6P) to form fructose 6-phosphate (Fru6P) and ammonium ion. The polypeptide is Glucosamine-6-phosphate deaminase (Beutenbergia cavernae (strain ATCC BAA-8 / DSM 12333 / CCUG 43141 / JCM 11478 / NBRC 16432 / NCIMB 13614 / HKI 0122)).